Consider the following 351-residue polypeptide: Aromatic amino acid aminotransferase (351 aa).

At lysine 215 the chain carries N6-(pyridoxal phosphate)lysine.

This sequence belongs to the class-II pyridoxal-phosphate-dependent aminotransferase family. Homodimer. It depends on pyridoxal 5'-phosphate as a cofactor.

The catalysed reaction is an aromatic L-alpha-amino acid + 2-oxoglutarate = an aromatic oxo-acid + L-glutamate. In terms of biological role, aminotransferase that catalyzes the conversion of aromatic amino acids and 2-oxoglutarate into corresponding aromatic oxo acids and L-glutamate. This Mycolicibacterium vanbaalenii (strain DSM 7251 / JCM 13017 / BCRC 16820 / KCTC 9966 / NRRL B-24157 / PYR-1) (Mycobacterium vanbaalenii) protein is Aromatic amino acid aminotransferase.